The sequence spans 1211 residues: A disintegrin and metalloproteinase with thrombospondin motifs 2 (1211 aa).

Positions 1–29 (MDPPAGAARRLLCPALLLLLLLLPPPLLP) are cleaved as a signal peptide. Residues 30-253 (PPPPPANARL…GVLEEHANSS (224 aa)) constitute a propeptide that is removed on maturation. Residues N112 and N251 are each glycosylated (N-linked (GlcNAc...) asparagine). The region spanning 266 to 470 (YNIEVLLGVD…HSYDCLLDDP (205 aa)) is the Peptidase M12B domain. 10 cysteine pairs are disulfide-bonded: C343–C392, C386–C465, C425–C451, C492–C517, C503–C526, C512–C545, C539–C550, C573–C610, C577–C615, and C588–C600. H408 contributes to the Zn(2+) binding site. The active site involves E409. Positions 412 and 418 each coordinate Zn(2+). In terms of domain architecture, Disintegrin spans 480 to 560 (QLPGLHYSMN…IWLTPDILKR (81 aa)). The 56-residue stretch at 561-616 (DGSWGAWSPFGSCSRTCGTGVKFRTRQCDNPHPANGGRTCSGLAYDFQLCSRQDCP) folds into the TSP type-1 1 domain. Positions 691–693 (RGD) match the Cell attachment site motif. The spacer stretch occupies residues 723–851 (KVVKGTFTRS…NVDDNNVLEE (129 aa)). TSP type-1 domains are found at residues 854-912 (VVYE…NPQE), 914-971 (SQPV…RACS), and 975-1029 (CPGR…GPCP). 2 N-linked (GlcNAc...) asparagine glycosylation sites follow: N949 and N993. Intrachain disulfides connect C987–C1023, C991–C1028, and C1002–C1012. N1031 is a glycosylation site (N-linked (GlcNAc...) asparagine). The PLAC domain maps to 1059–1097 (SKGHCQGDKSIFCRMEVLSRYCSIPGYNKLCCKSCNLYN). N-linked (GlcNAc...) asparagine glycosylation is found at N1098, N1145, and N1150. A disordered region spans residues 1170–1191 (LEDEVQPPNLIPRRPSPYEKTR).

May belong to a multimeric complex. Binds specifically to collagen type XIV. It depends on Zn(2+) as a cofactor. In terms of processing, the precursor is cleaved by a furin endopeptidase. Post-translationally, glycosylated. Can be O-fucosylated by POFUT2 on a serine or a threonine residue found within the consensus sequence C1-X(2)-(S/T)-C2-G of the TSP type-1 repeat domains where C1 and C2 are the first and second cysteine residue of the repeat, respectively. Fucosylated repeats can then be further glycosylated by the addition of a beta-1,3-glucose residue by the glucosyltransferase, B3GALTL. Fucosylation mediates the efficient secretion of ADAMTS family members. Can also be C-glycosylated with one or two mannose molecules on tryptophan residues within the consensus sequence W-X-X-W of the TPRs, and N-glycosylated. These other glycosylations can also facilitate secretion. In terms of tissue distribution, expressed at high level in skin, bone, tendon and aorta and at low levels in thymus and brain.

It localises to the secreted. The protein resides in the extracellular space. It is found in the extracellular matrix. The enzyme catalyses Cleaves the N-propeptide of collagen chain alpha1(I) at Pro-|-Gln and of alpha1(II) and alpha2(I) at Ala-|-Gln.. Its function is as follows. Cleaves the propeptides of type I and II collagen prior to fibril assembly. Does not act on type III collagen. Cleaves lysyl oxidase LOX at a site downstream of its propeptide cleavage site to produce a short LOX form with reduced collagen-binding activity. This chain is A disintegrin and metalloproteinase with thrombospondin motifs 2 (ADAMTS2), found in Homo sapiens (Human).